The chain runs to 218 residues: Pyridoxal 5'-phosphate synthase subunit PdxT (218 aa).

54–56 serves as a coordination point for L-glutamine; sequence GES. Cys86 acts as the Nucleophile in catalysis. Residues Arg120 and 149–150 contribute to the L-glutamine site; that span reads IR. Residues His197 and Glu199 each act as charge relay system in the active site.

This sequence belongs to the glutaminase PdxT/SNO family. As to quaternary structure, in the presence of PdxS, forms a dodecamer of heterodimers. Only shows activity in the heterodimer.

It catalyses the reaction aldehydo-D-ribose 5-phosphate + D-glyceraldehyde 3-phosphate + L-glutamine = pyridoxal 5'-phosphate + L-glutamate + phosphate + 3 H2O + H(+). The catalysed reaction is L-glutamine + H2O = L-glutamate + NH4(+). It participates in cofactor biosynthesis; pyridoxal 5'-phosphate biosynthesis. In terms of biological role, catalyzes the hydrolysis of glutamine to glutamate and ammonia as part of the biosynthesis of pyridoxal 5'-phosphate. The resulting ammonia molecule is channeled to the active site of PdxS. This Saccharopolyspora erythraea (strain ATCC 11635 / DSM 40517 / JCM 4748 / NBRC 13426 / NCIMB 8594 / NRRL 2338) protein is Pyridoxal 5'-phosphate synthase subunit PdxT.